A 211-amino-acid polypeptide reads, in one-letter code: Protein G12 (211 aa).

Residues 1 to 19 (MKIAAFVVACLVATSAVSC) form the signal peptide.

The chain is Protein G12 from Anopheles gambiae (African malaria mosquito).